The following is a 33-amino-acid chain: Photosystem II reaction center protein Psb30 (33 aa).

The helical transmembrane segment at 5–25 (ILAQLTALAFIVVSGPLVIAL) threads the bilayer.

The protein belongs to the Psb30/Ycf12 family. PSII is composed of 1 copy each of membrane proteins PsbA, PsbB, PsbC, PsbD, PsbE, PsbF, PsbH, PsbI, PsbJ, PsbK, PsbL, PsbM, PsbT, PsbX, PsbY, PsbZ, Psb30/Ycf12, peripheral proteins of the oxygen-evolving complex and a large number of cofactors. It forms dimeric complexes.

The protein localises to the plastid. Its subcellular location is the chloroplast thylakoid membrane. Functionally, a core subunit of photosystem II (PSII), probably helps stabilize the reaction center. The sequence is that of Photosystem II reaction center protein Psb30 from Chaetosphaeridium globosum (Charophycean green alga).